The chain runs to 182 residues: MEPLSLTVYDRNIWHLFKKEEGAPQAMFPTNIKYIFEDDDDVADVDDLVFQQQQPDSELENVIIVEIDGAGQLENVELISDQYEMLSYRRERPVSLASQRSLSWLTSGNDTGGDAGKKSGDISDPAAGPDVPREAPLSIELELVSEFKDYRNLNLEDLKLDELTRIFCIQNKQLQMISDALN.

A disordered region spans residues 105–134; it reads LTSGNDTGGDAGKKSGDISDPAAGPDVPRE.

The protein resides in the cytoplasm. Its subcellular location is the cytoskeleton. It is found in the preautophagosomal structure. Plays a role in starvation-induced autophagy. Involved in mitophagy. Functions with ATG17 and ATG29 at the preautophagosomal structure (PAS) in order to form normal autophagosomes under starvation conditions. May be involved in microtubule function, such as chromosome segregation and karyogamy. This chain is Autophagy-related protein 31 (CIS1), found in Candida glabrata (strain ATCC 2001 / BCRC 20586 / JCM 3761 / NBRC 0622 / NRRL Y-65 / CBS 138) (Yeast).